The primary structure comprises 147 residues: Hemoglobin subunit beta (147 aa).

N-acetylvaline is present on valine 2. The Globin domain maps to 3–147; the sequence is HLTGEEKSAV…VANALAHKYH (145 aa). Position 13 is a phosphothreonine (threonine 13). Serine 45 is subject to Phosphoserine. Lysine 60 carries the post-translational modification N6-acetyllysine. Residue histidine 64 participates in heme b binding. At lysine 83 the chain carries N6-acetyllysine. Histidine 93 is a binding site for heme b. Cysteine 94 is subject to S-nitrosocysteine. Lysine 145 carries the post-translational modification N6-acetyllysine.

This sequence belongs to the globin family. As to quaternary structure, heterotetramer of two alpha chains and two beta chains. In terms of tissue distribution, red blood cells.

Involved in oxygen transport from the lung to the various peripheral tissues. This chain is Hemoglobin subunit beta (HBB), found in Ateles paniscus (Black spider monkey).